The chain runs to 122 residues: uncharacterized protein (122 aa).

Polar residues predominate over residues methionine 1–leucine 10. A disordered region spans residues methionine 1–glycine 68. Over residues glutamine 40–aspartate 56 the composition is skewed to basic and acidic residues.

This is an uncharacterized protein from Bos taurus (Bovine).